The chain runs to 209 residues: Large ribosomal subunit protein uL3 (209 aa).

Residues 141 to 163 are disordered; sequence RAVGSMGASSDPSRTFKNKRMPG.

This sequence belongs to the universal ribosomal protein uL3 family. In terms of assembly, part of the 50S ribosomal subunit. Forms a cluster with proteins L14 and L19.

In terms of biological role, one of the primary rRNA binding proteins, it binds directly near the 3'-end of the 23S rRNA, where it nucleates assembly of the 50S subunit. The sequence is that of Large ribosomal subunit protein uL3 from Clostridium botulinum (strain Kyoto / Type A2).